The primary structure comprises 71 residues: MAVPKKRTSRSKKKIRKNVRKGKKHIGPAIKAFSLAKSISTGHSKSFYCIVNDDSSGSSESKLTAFDLDDP.

The disordered stretch occupies residues 1–24 (MAVPKKRTSRSKKKIRKNVRKGKK).

This sequence belongs to the bacterial ribosomal protein bL32 family.

Its subcellular location is the plastid. It localises to the chloroplast. This chain is Large ribosomal subunit protein bL32c, found in Pinus koraiensis (Korean pine).